A 131-amino-acid polypeptide reads, in one-letter code: Torsin-1A-interacting protein 2, isoform IFRG15 (131 aa).

This is Torsin-1A-interacting protein 2, isoform IFRG15 (TOR1AIP2) from Homo sapiens (Human).